The chain runs to 544 residues: MEAWRCVRRGYGRCVVGRGRYPMLPHHQKSLGRDWTTPWENLQKCCWNRHISSCMRWPGHYSRAPYPYFSSRHFSLNWRPPGLFESRAPFQYWNWRPDSLSQTSLFHLSSYIMNSEGDEPSSKRRKHQGTIQRHWEYICNHNKENTKILGDENVDPICEDSENKFEFSVMSYNILSQDLLEDNSHLYKHCRRPVLHWSFRFPNILKEIKHFDADVLCLQEVQEDHYGTEIRPSLESLGYHCEYKMRTGRKPDGCAICFKHSKFSLLSVNPVEFYRRDVPLLDRDNVGLVLLLQPKIPSATSPAICVANTHLLYNPRRGDIKLTQLAMLLAEISSVAHQKDGRFCPIVMCGDFNSVPGSPLYSFIKEGKLNYEGLAIGKVSGQEQSSRGQRILSIPIWPPNLGISQNCVYEVQQVPKVEKPDGDLTQPELDKTEVLVTAEKLSSNLQHHFSLSSVYSHYLPDTGIPEVTTCHSRSAVTVDYIFYSAEKEGVAEQPGAEVALVGGLKLLARLSLLTEQDLWTVNGLPNENNSSDHLPLLAKFRLEL.

This sequence belongs to the CCR4/nocturin family.

This Bos taurus (Bovine) protein is Protein angel homolog 2 (ANGEL2).